The following is a 286-amino-acid chain: 2-hydroxy-6-oxononadienedioate/2-hydroxy-6-oxononatrienedioate hydrolase 2 (286 aa).

The Proton acceptor role is filled by histidine 266.

This sequence belongs to the AB hydrolase superfamily. MhpC family. As to quaternary structure, homodimer.

The enzyme catalyses (2Z,4E)-2-hydroxy-6-oxonona-2,4-dienedioate + H2O = (2Z)-2-hydroxypenta-2,4-dienoate + succinate + H(+). It catalyses the reaction (2Z,4E,7E)-2-hydroxy-6-oxonona-2,4,7-trienedioate + H2O = (2Z)-2-hydroxypenta-2,4-dienoate + fumarate + H(+). It functions in the pathway aromatic compound metabolism; 3-phenylpropanoate degradation. In terms of biological role, catalyzes the cleavage of the C5-C6 bond of 2-hydroxy-6-oxononadienedioate and 2-hydroxy-6-oxononatrienedioate, a dienol ring fission product of the bacterial meta-cleavage pathway for degradation of phenylpropionic acid. The polypeptide is 2-hydroxy-6-oxononadienedioate/2-hydroxy-6-oxononatrienedioate hydrolase 2 (Pseudomonas putida (Arthrobacter siderocapsulatus)).